A 177-amino-acid polypeptide reads, in one-letter code: Large ribosomal subunit protein uL5 (177 aa).

The protein belongs to the universal ribosomal protein uL5 family. In terms of assembly, part of the 50S ribosomal subunit. Interacts with protein L18 and the 5S rRNA, and probably with tRNAs. Forms a bridge to the 30S subunit in the 70S ribosome.

In terms of biological role, this is 1 of 5 proteins that mediates the attachment of the 5S rRNA onto the large ribosomal subunit, stabilizing the orientation of adjacent RNA domains. Forms part of the central protuberance. Modeling places the A and P site tRNAs in close proximity to this protein; the 5S rRNA and some of its associated proteins might help stabilize positioning of ribosome-bound tRNAs. In the 70S ribosome it is thought to contact protein S13 of the 30S subunit (bridge B1b), connecting the 2 subunits; this bridge is implicated in subunit movement. This chain is Large ribosomal subunit protein uL5 (rpl5), found in Haloarcula marismortui (strain ATCC 43049 / DSM 3752 / JCM 8966 / VKM B-1809) (Halobacterium marismortui).